Consider the following 364-residue polypeptide: UDP-N-acetylglucosamine--N-acetylmuramyl-(pentapeptide) pyrophosphoryl-undecaprenol N-acetylglucosamine transferase 1 (364 aa).

UDP-N-acetyl-alpha-D-glucosamine is bound by residues 10–12 (TGG), Asn124, Ser195, Ile250, and Gln295.

This sequence belongs to the glycosyltransferase 28 family. MurG subfamily.

It is found in the cell membrane. It carries out the reaction di-trans,octa-cis-undecaprenyl diphospho-N-acetyl-alpha-D-muramoyl-L-alanyl-D-glutamyl-meso-2,6-diaminopimeloyl-D-alanyl-D-alanine + UDP-N-acetyl-alpha-D-glucosamine = di-trans,octa-cis-undecaprenyl diphospho-[N-acetyl-alpha-D-glucosaminyl-(1-&gt;4)]-N-acetyl-alpha-D-muramoyl-L-alanyl-D-glutamyl-meso-2,6-diaminopimeloyl-D-alanyl-D-alanine + UDP + H(+). Its pathway is cell wall biogenesis; peptidoglycan biosynthesis. Cell wall formation. Catalyzes the transfer of a GlcNAc subunit on undecaprenyl-pyrophosphoryl-MurNAc-pentapeptide (lipid intermediate I) to form undecaprenyl-pyrophosphoryl-MurNAc-(pentapeptide)GlcNAc (lipid intermediate II). This chain is UDP-N-acetylglucosamine--N-acetylmuramyl-(pentapeptide) pyrophosphoryl-undecaprenol N-acetylglucosamine transferase 1, found in Bacillus cereus (strain ATCC 14579 / DSM 31 / CCUG 7414 / JCM 2152 / NBRC 15305 / NCIMB 9373 / NCTC 2599 / NRRL B-3711).